Consider the following 434-residue polypeptide: Tol-Pal system protein TolB (434 aa).

A signal peptide spans 1 to 24 (MKFSAYLTTLFIVLFSLFIQTVQA).

It belongs to the TolB family. As to quaternary structure, the Tol-Pal system is composed of five core proteins: the inner membrane proteins TolA, TolQ and TolR, the periplasmic protein TolB and the outer membrane protein Pal. They form a network linking the inner and outer membranes and the peptidoglycan layer.

It localises to the periplasm. Part of the Tol-Pal system, which plays a role in outer membrane invagination during cell division and is important for maintaining outer membrane integrity. The polypeptide is Tol-Pal system protein TolB (Histophilus somni (strain 2336) (Haemophilus somnus)).